A 420-amino-acid polypeptide reads, in one-letter code: MALSSLLRSAATSAAAPRVELYPSSSYNHSQVTSSLGFSHSLTSSRFSGAAVSTGKYNAKRVQPIKATATEAPPAVHRSRSSGKTKVGINGFGRIGRLVLRIATFRDDIEVVAVNDPFIDAKYMAYMFKYDSTHGNYKGTINVIDDSTLEINGKQVKVVSKRDPAEIPWADLGAEYVVESSGVFTTVGQASSHLKGGAKKVIISAPSADAPMFVVGVNEKTYLPNMDIVSNASCTTNCLAPLAKVVHEEFGILEGLMTTVHATTATQKTVDGPSMKDWRGGRGASQNIIPSSTGAAKAVGKVLPELNGKLTGMAFRVPTPNVSVVDLTCRLEKDASYEDVKAAIKFASEGPLRGILGYTEEDVVSNDFLGDSRSSIFDANAGIGLSKSFMKLVSWYDNEWGYSNRVLDLIEHMALVAASR.

Residues methionine 1–lysine 66 constitute a chloroplast transit peptide. Residues arginine 94–isoleucine 95, aspartate 116, and arginine 162 each bind NAD(+). D-glyceraldehyde 3-phosphate-binding positions include serine 233–threonine 235, threonine 264, threonine 293–glycine 294, and arginine 316. The Nucleophile role is filled by cysteine 234. Residue asparagine 398 coordinates NAD(+).

This sequence belongs to the glyceraldehyde-3-phosphate dehydrogenase family. In terms of assembly, homotetramer. Expressed in shoot and root vasculature, leaf veins and vascular tissue of flowers and siliques.

The protein localises to the plastid. The protein resides in the chloroplast stroma. It carries out the reaction D-glyceraldehyde 3-phosphate + phosphate + NAD(+) = (2R)-3-phospho-glyceroyl phosphate + NADH + H(+). Functionally, involved in plastidial glycolytic pathway and plays a specific role in glycolytic energy production in non-green plastids and chloroplasts. Essential for breakdown of starch to form sucrose for export to non-photosynthetic tissues, and to generate primary metabolites for anabolic pathways such as fatty acid and amino acid synthesis. Plays an important role in plant development by providing substrates for the phosphorylated pathway of serine biosynthesis in roots. Plays a crucial role in pollen development. Functionally redundant with GAPCP1. In Arabidopsis thaliana (Mouse-ear cress), this protein is Glyceraldehyde-3-phosphate dehydrogenase GAPCP2, chloroplastic (GAPCP2).